Reading from the N-terminus, the 151-residue chain is Protein A151R (151 aa).

The protein belongs to the asfivirus A151R family. In terms of assembly, monomer. Homodimer. Interacts with protein B119L. Interacts with membrane protein E248R. The cofactor is Zn(2+).

In terms of biological role, may participate in a redox cascade for the formation of disulfide bonds in viral proteins. The chain is Protein A151R from Ornithodoros (relapsing fever ticks).